The chain runs to 582 residues: Phosphoribosylaminoimidazole carboxylase (582 aa).

Positions 114–305 constitute an ATP-grasp domain; that stretch reads KKYLAERGVA…QFENHLRAIL (192 aa). 143–200 serves as a coordination point for ATP; the sequence is AGRLGLPLMLKAKTLAYDGRGNSPLKSASSEDIQASLKFLGDRPLYAEGWAPFVKEVA.

It in the C-terminal section; belongs to the AIR carboxylase family. Class I subfamily.

The catalysed reaction is 5-amino-1-(5-phospho-D-ribosyl)imidazole-4-carboxylate + H(+) = 5-amino-1-(5-phospho-beta-D-ribosyl)imidazole + CO2. Its pathway is purine metabolism; IMP biosynthesis via de novo pathway; 5-amino-1-(5-phospho-D-ribosyl)imidazole-4-carboxylate from 5-amino-1-(5-phospho-D-ribosyl)imidazole (carboxylase route): step 1/1. In Cryptococcus neoformans var. neoformans serotype D (strain B-3501A) (Filobasidiella neoformans), this protein is Phosphoribosylaminoimidazole carboxylase (ADE2).